Consider the following 69-residue polypeptide: DNA-directed RNA polymerase subunit epsilon (69 aa).

This sequence belongs to the RNA polymerase subunit epsilon family. In terms of assembly, RNAP is composed of a core of 2 alpha, a beta and a beta' subunit. The core is associated with a delta subunit, and at least one of epsilon or omega. When a sigma factor is associated with the core the holoenzyme is formed, which can initiate transcription.

It carries out the reaction RNA(n) + a ribonucleoside 5'-triphosphate = RNA(n+1) + diphosphate. A non-essential component of RNA polymerase (RNAP). The protein is DNA-directed RNA polymerase subunit epsilon of Listeria welshimeri serovar 6b (strain ATCC 35897 / DSM 20650 / CCUG 15529 / CIP 8149 / NCTC 11857 / SLCC 5334 / V8).